Reading from the N-terminus, the 241-residue chain is Uridylate kinase (241 aa).

15-18 (KLSG) contacts ATP. The tract at residues 23-28 (GTEGFG) is involved in allosteric activation by GTP. Glycine 57 lines the UMP pocket. Residues glycine 58 and arginine 62 each coordinate ATP. UMP-binding positions include aspartate 77 and 138–145 (TGNPFFTT). Residues threonine 165, phenylalanine 171, and aspartate 174 each contribute to the ATP site.

The protein belongs to the UMP kinase family. In terms of assembly, homohexamer.

Its subcellular location is the cytoplasm. It carries out the reaction UMP + ATP = UDP + ADP. Its pathway is pyrimidine metabolism; CTP biosynthesis via de novo pathway; UDP from UMP (UMPK route): step 1/1. With respect to regulation, allosterically activated by GTP. Inhibited by UTP. In terms of biological role, catalyzes the reversible phosphorylation of UMP to UDP. This chain is Uridylate kinase, found in Escherichia coli O139:H28 (strain E24377A / ETEC).